The primary structure comprises 209 residues: ATP-dependent dethiobiotin synthetase BioD (209 aa).

Residue 13 to 18 (DIGKTV) coordinates ATP. A Mg(2+)-binding site is contributed by threonine 17. Lysine 33 is a catalytic residue. Residues arginine 47 and glutamate 100 each coordinate Mg(2+). Residues 100 to 103 (EGAG) and 184 to 186 (PRL) each bind ATP.

The protein belongs to the dethiobiotin synthetase family. Homodimer. It depends on Mg(2+) as a cofactor.

It is found in the cytoplasm. The enzyme catalyses (7R,8S)-7,8-diammoniononanoate + CO2 + ATP = (4R,5S)-dethiobiotin + ADP + phosphate + 3 H(+). It functions in the pathway cofactor biosynthesis; biotin biosynthesis; biotin from 7,8-diaminononanoate: step 1/2. Its function is as follows. Catalyzes a mechanistically unusual reaction, the ATP-dependent insertion of CO2 between the N7 and N8 nitrogen atoms of 7,8-diaminopelargonic acid (DAPA, also called 7,8-diammoniononanoate) to form a ureido ring. The chain is ATP-dependent dethiobiotin synthetase BioD from Rhodopseudomonas palustris (strain BisB18).